A 321-amino-acid polypeptide reads, in one-letter code: Methionyl-tRNA formyltransferase (321 aa).

A (6S)-5,6,7,8-tetrahydrofolate-binding site is contributed by 112-115 (SILP).

The protein belongs to the Fmt family.

It catalyses the reaction L-methionyl-tRNA(fMet) + (6R)-10-formyltetrahydrofolate = N-formyl-L-methionyl-tRNA(fMet) + (6S)-5,6,7,8-tetrahydrofolate + H(+). In terms of biological role, attaches a formyl group to the free amino group of methionyl-tRNA(fMet). The formyl group appears to play a dual role in the initiator identity of N-formylmethionyl-tRNA by promoting its recognition by IF2 and preventing the misappropriation of this tRNA by the elongation apparatus. The protein is Methionyl-tRNA formyltransferase of Shewanella piezotolerans (strain WP3 / JCM 13877).